The sequence spans 89 residues: Small ribosomal subunit protein uS15 (89 aa).

It belongs to the universal ribosomal protein uS15 family. As to quaternary structure, part of the 30S ribosomal subunit. Forms a bridge to the 50S subunit in the 70S ribosome, contacting the 23S rRNA.

One of the primary rRNA binding proteins, it binds directly to 16S rRNA where it helps nucleate assembly of the platform of the 30S subunit by binding and bridging several RNA helices of the 16S rRNA. In terms of biological role, forms an intersubunit bridge (bridge B4) with the 23S rRNA of the 50S subunit in the ribosome. The polypeptide is Small ribosomal subunit protein uS15 (Geobacillus kaustophilus (strain HTA426)).